Here is a 205-residue protein sequence, read N- to C-terminus: Urease accessory protein UreE (205 aa).

A compositionally biased stretch (basic and acidic residues) spans 170 to 192 (EHHGHSHSHSHDHDHDHDHDHQH). The tract at residues 170–205 (EHHGHSHSHSHDHDHDHDHDHQHGPCCSHGHHHGHR) is disordered.

The protein belongs to the UreE family.

Its subcellular location is the cytoplasm. In terms of biological role, involved in urease metallocenter assembly. Binds nickel. Probably functions as a nickel donor during metallocenter assembly. The protein is Urease accessory protein UreE of Burkholderia pseudomallei (strain 668).